Reading from the N-terminus, the 429-residue chain is Enolase (429 aa).

Residue Gln167 coordinates (2R)-2-phosphoglycerate. The active-site Proton donor is Glu209. Positions 246, 289, and 316 each coordinate Mg(2+). Residues Lys341, Arg370, Ser371, and Lys392 each coordinate (2R)-2-phosphoglycerate. Lys341 serves as the catalytic Proton acceptor.

The protein belongs to the enolase family. In terms of assembly, component of the RNA degradosome, a multiprotein complex involved in RNA processing and mRNA degradation. Mg(2+) serves as cofactor.

It localises to the cytoplasm. The protein resides in the secreted. The protein localises to the cell surface. It carries out the reaction (2R)-2-phosphoglycerate = phosphoenolpyruvate + H2O. Its pathway is carbohydrate degradation; glycolysis; pyruvate from D-glyceraldehyde 3-phosphate: step 4/5. In terms of biological role, catalyzes the reversible conversion of 2-phosphoglycerate (2-PG) into phosphoenolpyruvate (PEP). It is essential for the degradation of carbohydrates via glycolysis. The chain is Enolase from Ectopseudomonas mendocina (strain ymp) (Pseudomonas mendocina).